The sequence spans 265 residues: MNRNPYSRYYVPGPSPWPFFVAISANGMAVGLILWLHRTPSFLLMGMSLVCMLLSTFSWWRDLIREGDIGFHTRFVIKSFRDCVALFILSEVMFFFTFFWTFFHNALSPSCELGMRWPPPGIRTPNPSSTSLFETGLLISSGLFVTQAHKSMRLKDYDVGPFIGLVVTIVCGTVFFLVQLREYYWNSYTIADSVYGSVFYLLTGFHGMHVVVGTIWLMVSLVRLWRGEFSSQRHFGFEACIWYWHFVDVVWVALWCLVYVWFGGW.

6 helical membrane-spanning segments follow: residues 16 to 36 (PWPFFVAISANGMAVGLILWL), 40 to 60 (PSFLLMGMSLVCMLLSTFSWW), 83 to 103 (CVALFILSEVMFFFTFFWTFF), 159 to 179 (VGPFIGLVVTIVCGTVFFLVQ), 198 to 218 (VFYLLTGFHGMHVVVGTIWLM), and 241 to 261 (IWYWHFVDVVWVALWCLVYVW).

The protein belongs to the cytochrome c oxidase subunit 3 family. As to quaternary structure, component of the cytochrome c oxidase (complex IV, CIV), a multisubunit enzyme composed of a catalytic core of 3 subunits and several supernumerary subunits. The complex exists as a monomer or a dimer and forms supercomplexes (SCs) in the inner mitochondrial membrane with ubiquinol-cytochrome c oxidoreductase (cytochrome b-c1 complex, complex III, CIII).

The protein localises to the mitochondrion inner membrane. It catalyses the reaction 4 Fe(II)-[cytochrome c] + O2 + 8 H(+)(in) = 4 Fe(III)-[cytochrome c] + 2 H2O + 4 H(+)(out). In terms of biological role, component of the cytochrome c oxidase, the last enzyme in the mitochondrial electron transport chain which drives oxidative phosphorylation. The respiratory chain contains 3 multisubunit complexes succinate dehydrogenase (complex II, CII), ubiquinol-cytochrome c oxidoreductase (cytochrome b-c1 complex, complex III, CIII) and cytochrome c oxidase (complex IV, CIV), that cooperate to transfer electrons derived from NADH and succinate to molecular oxygen, creating an electrochemical gradient over the inner membrane that drives transmembrane transport and the ATP synthase. Cytochrome c oxidase is the component of the respiratory chain that catalyzes the reduction of oxygen to water. Electrons originating from reduced cytochrome c in the intermembrane space (IMS) are transferred via the dinuclear copper A center (CU(A)) of subunit 2 and heme A of subunit 1 to the active site in subunit 1, a binuclear center (BNC) formed by heme A3 and copper B (CU(B)). The BNC reduces molecular oxygen to 2 water molecules using 4 electrons from cytochrome c in the IMS and 4 protons from the mitochondrial matrix. This is Cytochrome c oxidase subunit 3 (COIII) from Mytilus edulis (Blue mussel).